Here is a 191-residue protein sequence, read N- to C-terminus: Small ribosomal subunit protein uS4A (191 aa).

Residues Ser-50 and Ser-161 each carry the phosphoserine modification. In terms of domain architecture, S4 RNA-binding spans 107-181; sequence RRLQTQVFKL…CKRKRLRSQE (75 aa). Tyr-164 carries the post-translational modification Phosphotyrosine. The segment at 166 to 191 is disordered; that stretch reads GGRPGRCKRKRLRSQEGGEGEEAEEE. The residue at position 179 (Ser-179) is a Phosphoserine.

The protein belongs to the universal ribosomal protein uS4 family. Component of the small ribosomal subunit (SSU). Mature yeast ribosomes consist of a small (40S) and a large (60S) subunit. The 40S small subunit contains 1 molecule of ribosomal RNA (18S rRNA) and at least 33 different proteins. The large 60S subunit contains 3 rRNA molecules (25S, 5.8S and 5S rRNA) and at least 46 different proteins. Interacts with snoRNA U3. uS11 interacts with MPP10. Component of the ribosomal small subunit (SSU) processome composed of at least 40 protein subunits and snoRNA U3.

The protein resides in the cytoplasm. In terms of biological role, component of the ribosome, a large ribonucleoprotein complex responsible for the synthesis of proteins in the cell. The small ribosomal subunit (SSU) binds messenger RNAs (mRNAs) and translates the encoded message by selecting cognate aminoacyl-transfer RNA (tRNA) molecules. The large subunit (LSU) contains the ribosomal catalytic site termed the peptidyl transferase center (PTC), which catalyzes the formation of peptide bonds, thereby polymerizing the amino acids delivered by tRNAs into a polypeptide chain. The nascent polypeptides leave the ribosome through a tunnel in the LSU and interact with protein factors that function in enzymatic processing, targeting, and the membrane insertion of nascent chains at the exit of the ribosomal tunnel. uS4 is involved in nucleolar processing of pre-18S ribosomal RNA and ribosome assembly. In Schizosaccharomyces pombe (strain 972 / ATCC 24843) (Fission yeast), this protein is Small ribosomal subunit protein uS4A (rps901).